The sequence spans 238 residues: Oxidoreductase dmxR7 (238 aa).

This sequence belongs to the avfA family.

The protein operates within secondary metabolite biosynthesis. Its function is as follows. Oxidoreductase; part of the gene cluster that mediates the biosynthesis of the dimeric xanthones cryptosporioptides. The pathway begins with the synthesis of atrochrysone thioester by the polyketide synthase dmx-nrPKS. The atrochrysone carboxyl ACP thioesterase dmxR1 then breaks the thioester bond and releases the atrochrysone carboxylic acid from dmx-nrPKS. Atrochrysone carboxylic acid is decarboxylated by the decarboxylase dmxR15, and oxidized by the anthrone oxygenase dmxR16 to yield emodin. Emodin is then reduced to emodin hydroquinone by the oxidoreductase dmxR7. A-ring reduction by the short chain dehydrogenase dmxR18, dehydration by the scytalone dehydratase-like protein dmxR17 and probable spontaneous re-oxidation, results in overall deoxygenation to chrysophanol. Baeyer-Villiger oxidation by the Baeyer-Villiger monooxygenase (BVMO) dmxR6 then yields monodictylactone in equilibrium with monodictyphenone. In the case of the cryptosporioptides biosynthesis, monodictylactone is reduced at C-12 to an alcohol (by the short chain dehydrogenases dmxR12 or dmxR8) and hydroxylated at C-5 by dmxR9, yielding the electron-rich aromatic which could eliminate H(2)O to form the ortho-quinonemethide, followed by tautomerisation to paraquinone and complete the formal reduction to produce the 10-methylgroup. Conjugate addition of C-4a-OH to the resulting paraquinone by the monooxygenase dmxR10 then gives cyclohexadienone, which is then reduced at C-5 by the short chain dehydrogenase dmxR3 to give the dihydroxanthone. The 6,7-epoxide in the cryptosporioptides could be introduced by the cytochrome P450 monooxygenase dmxL3. The highly reducing PKS dmxL2 manufactures butyrate, which is further carboxylated by dmxL1 to form ethylmalonate. It is not yet clear whether the carboxylation occurs while the butyrate is attached to the ACP of dmxL2, but this unusual fungal metabolite could then be esterified to O-5 by the O-acetyltransferase dmxR13. Finally, dimerization performed by dmxR5 gives the observed dimers cryptosporioptides A, B and C as the final products of the pathway. The chain is Oxidoreductase dmxR7 from Cryptosporiopsis sp. (strain 8999).